A 340-amino-acid polypeptide reads, in one-letter code: NADH-quinone oxidoreductase subunit H (340 aa).

9 consecutive transmembrane segments (helical) span residues 3–23 (LVGMVALMVGVLVSVAYLVYM), 69–89 (WAFFAAPVITFALALAGWAVI), 102–122 (VVVMPYVVADLNLGVLYVLAI), 127–147 (VYGIIMAGWASGSNYAFLGAI), 154–174 (ISYEMSMGLVMLSVSLCAGSL), 186–206 (MPYWMDLLLLPMAGVFFVSML), 248–268 (ILVSAMMVVLFLGGWYPPLNI), 274–294 (IPGFVWFCSKVFLLLFCFIWV), and 312–332 (KVFLPFSFVWVMVISGVLLWV).

This sequence belongs to the complex I subunit 1 family. NDH-1 is composed of 14 different subunits. Subunits NuoA, H, J, K, L, M, N constitute the membrane sector of the complex.

Its subcellular location is the cell inner membrane. It catalyses the reaction a quinone + NADH + 5 H(+)(in) = a quinol + NAD(+) + 4 H(+)(out). Its function is as follows. NDH-1 shuttles electrons from NADH, via FMN and iron-sulfur (Fe-S) centers, to quinones in the respiratory chain. The immediate electron acceptor for the enzyme in this species is believed to be ubiquinone. Couples the redox reaction to proton translocation (for every two electrons transferred, four hydrogen ions are translocated across the cytoplasmic membrane), and thus conserves the redox energy in a proton gradient. This subunit may bind ubiquinone. The protein is NADH-quinone oxidoreductase subunit H of Anaplasma phagocytophilum (strain HZ).